Reading from the N-terminus, the 351-residue chain is Autoinducer 2 import system permease protein LsrC (351 aa).

Transmembrane regions (helical) follow at residues 14 to 34 (LLAI…YFSL), 39 to 59 (MIFS…LVML), 70 to 90 (ITGL…GLVA), 93 to 113 (LFAL…VTWL), 115 to 135 (IPAI…MLLL), 155 to 175 (ILFS…AMAW), 213 to 233 (MNGV…GFIP), 252 to 272 (GISL…AFLL), and 284 to 304 (LPAW…LVFD).

The protein belongs to the binding-protein-dependent transport system permease family. AraH/RbsC subfamily. In terms of assembly, the complex is composed of two ATP-binding proteins (LsrA), two transmembrane proteins (LsrC and LsrD) and a solute-binding protein (LsrB).

Its subcellular location is the cell inner membrane. Functionally, part of the ABC transporter complex LsrABCD involved in autoinducer 2 (AI-2) import. Probably responsible for the translocation of the substrate across the membrane. The protein is Autoinducer 2 import system permease protein LsrC (lsrC) of Yersinia pseudotuberculosis serotype O:3 (strain YPIII).